Here is a 253-residue protein sequence, read N- to C-terminus: E3 ubiquitin-protein ligase MARCHF3 (253 aa).

The segment at 63 to 123 (SPFNDRPMCR…ELCHFRFAVE (61 aa)) adopts an RING-CH-type zinc-finger fold. Zn(2+)-binding residues include C71, C74, C87, C89, H97, C100, C113, and C116. 2 consecutive transmembrane segments (helical) span residues 145-165 (LFGD…SGWL) and 182-202 (AVGL…WTLV). Phosphoserine is present on residues S237 and S243.

Interacts with MARCHF2 and STX6. In terms of tissue distribution, expressed predominantly in lung, colon and spleen. Present in liver (at protein level).

It is found in the cytoplasmic vesicle membrane. The protein resides in the early endosome membrane. The catalysed reaction is S-ubiquitinyl-[E2 ubiquitin-conjugating enzyme]-L-cysteine + [acceptor protein]-L-lysine = [E2 ubiquitin-conjugating enzyme]-L-cysteine + N(6)-ubiquitinyl-[acceptor protein]-L-lysine.. The protein operates within protein modification; protein ubiquitination. In terms of biological role, E3 ubiquitin-protein ligase which may be involved in endosomal trafficking. E3 ubiquitin ligases accept ubiquitin from an E2 ubiquitin-conjugating enzyme in the form of a thioester and then directly transfer the ubiquitin to targeted substrates. This chain is E3 ubiquitin-protein ligase MARCHF3 (Marchf3), found in Rattus norvegicus (Rat).